A 119-amino-acid chain; its full sequence is NADH-quinone oxidoreductase subunit A (119 aa).

3 consecutive transmembrane segments (helical) span residues 9–29 (VLLF…LGYV), 63–83 (LVAI…PWAV), and 88–108 (VGMA…VGFA).

Belongs to the complex I subunit 3 family. In terms of assembly, NDH-1 is composed of 14 different subunits. Subunits NuoA, H, J, K, L, M, N constitute the membrane sector of the complex.

Its subcellular location is the cell inner membrane. It carries out the reaction a quinone + NADH + 5 H(+)(in) = a quinol + NAD(+) + 4 H(+)(out). Functionally, NDH-1 shuttles electrons from NADH, via FMN and iron-sulfur (Fe-S) centers, to quinones in the respiratory chain. The immediate electron acceptor for the enzyme in this species is believed to be ubiquinone. Couples the redox reaction to proton translocation (for every two electrons transferred, four hydrogen ions are translocated across the cytoplasmic membrane), and thus conserves the redox energy in a proton gradient. The chain is NADH-quinone oxidoreductase subunit A from Verminephrobacter eiseniae (strain EF01-2).